A 490-amino-acid chain; its full sequence is Cysteine desulfurase, mitochondrial (490 aa).

Pyridoxal 5'-phosphate-binding positions include 161-162 (AT), Asn-241, Gln-269, and 289-291 (SSH). Position 292 is an N6-(pyridoxal phosphate)lysine (Lys-292). A pyridoxal 5'-phosphate-binding site is contributed by Thr-329. Catalysis depends on Cys-414, which acts as the Cysteine persulfide intermediate. Cys-414 is a binding site for [2Fe-2S] cluster.

Belongs to the class-V pyridoxal-phosphate-dependent aminotransferase family. NifS/IscS subfamily. Pyridoxal 5'-phosphate is required as a cofactor.

It is found in the mitochondrion. The catalysed reaction is (sulfur carrier)-H + L-cysteine = (sulfur carrier)-SH + L-alanine. Catalyzes the removal of elemental sulfur from cysteine to produce alanine. It supplies the inorganic sulfur for iron-sulfur (Fe-S) clusters. Plays a role in both tRNA-processing and mitochondrial metabolism. Involved in the 2-thio-modification of both 5-carboxymethylaminomethyl-2-thiouridine in mitochondrial tRNAs and 5-methoxycarbonylmethyl-2-thiouridine (mcm5s2U) in cytoplasmic tRNAs. This chain is Cysteine desulfurase, mitochondrial, found in Eremothecium gossypii (strain ATCC 10895 / CBS 109.51 / FGSC 9923 / NRRL Y-1056) (Yeast).